A 211-amino-acid polypeptide reads, in one-letter code: Probable nicotinate-nucleotide adenylyltransferase (211 aa).

It belongs to the NadD family.

It catalyses the reaction nicotinate beta-D-ribonucleotide + ATP + H(+) = deamido-NAD(+) + diphosphate. It participates in cofactor biosynthesis; NAD(+) biosynthesis; deamido-NAD(+) from nicotinate D-ribonucleotide: step 1/1. Catalyzes the reversible adenylation of nicotinate mononucleotide (NaMN) to nicotinic acid adenine dinucleotide (NaAD). This Cellvibrio japonicus (strain Ueda107) (Pseudomonas fluorescens subsp. cellulosa) protein is Probable nicotinate-nucleotide adenylyltransferase.